Consider the following 479-residue polypeptide: PRAME family member 18 (479 aa).

An LRR 1 repeat occupies 15–38 (QSLLRDQALAISVLDELPRELFPP). Residues 97–124 (RWKLQVLEMRDVDENFWTIWSGARLLSC) form an LRR 1; degenerate repeat. An LRR 2; degenerate repeat occupies 179 to 203 (HLCCTKVVNYSMSILNFRNILETVY). The LRR 3; degenerate repeat unit spans residues 204-230 (PDSIQVLEIWNMCWLCMIVEFSRYLSQ). Residues 231-265 (MRNLRKLFISDGCRYLLSSDSQEQLVAEFSSVLLR) form an LRR 4; degenerate repeat. 5 LRR repeats span residues 266–291 (LENLQMLYVRRVCFFRGHLDQLIRCL), 292–323 (RSPLETLALTYGFLEEEDLKCLPRYPSLSQLK), 324–342 (QLNLSHGALRFIRLEPLRA), 348–375 (AATLQTLFLVDCGIGYSKLRVILPALSR), and 376–400 (CSNLTTFCFHGNDTSMDALKDLLRH).

Belongs to the PRAME family.

The protein is PRAME family member 18 of Homo sapiens (Human).